Reading from the N-terminus, the 806-residue chain is Leucine--tRNA ligase (806 aa).

The 'HIGH' region signature appears at 38–48 (PYPSGEIHMGH). Positions 572 to 576 (KMSKS) match the 'KMSKS' region motif. Lysine 575 serves as a coordination point for ATP.

The protein belongs to the class-I aminoacyl-tRNA synthetase family.

The protein localises to the cytoplasm. It carries out the reaction tRNA(Leu) + L-leucine + ATP = L-leucyl-tRNA(Leu) + AMP + diphosphate. This is Leucine--tRNA ligase from Helicobacter pylori (strain HPAG1).